A 391-amino-acid polypeptide reads, in one-letter code: Phosphoglycerate kinase (391 aa).

Substrate contacts are provided by residues 19 to 21 (DYN), arginine 35, 58 to 61 (HMGR), arginine 117, and arginine 150. ATP contacts are provided by residues lysine 201, glutamate 323, and 349-352 (GGDT).

It belongs to the phosphoglycerate kinase family. Monomer.

The protein resides in the cytoplasm. It catalyses the reaction (2R)-3-phosphoglycerate + ATP = (2R)-3-phospho-glyceroyl phosphate + ADP. It participates in carbohydrate degradation; glycolysis; pyruvate from D-glyceraldehyde 3-phosphate: step 2/5. The chain is Phosphoglycerate kinase from Desulforapulum autotrophicum (strain ATCC 43914 / DSM 3382 / VKM B-1955 / HRM2) (Desulfobacterium autotrophicum).